Reading from the N-terminus, the 315-residue chain is tRNA dimethylallyltransferase (315 aa).

Position 14 to 21 (14 to 21 (GPTASGKT)) interacts with ATP. 16–21 (TASGKT) contacts substrate. Interaction with substrate tRNA regions lie at residues 39–42 (DSAL), 163–167 (QRIQR), and 248–253 (RCVGYR).

This sequence belongs to the IPP transferase family. Monomer. Mg(2+) is required as a cofactor.

It catalyses the reaction adenosine(37) in tRNA + dimethylallyl diphosphate = N(6)-dimethylallyladenosine(37) in tRNA + diphosphate. In terms of biological role, catalyzes the transfer of a dimethylallyl group onto the adenine at position 37 in tRNAs that read codons beginning with uridine, leading to the formation of N6-(dimethylallyl)adenosine (i(6)A). The polypeptide is tRNA dimethylallyltransferase (Paraburkholderia phytofirmans (strain DSM 17436 / LMG 22146 / PsJN) (Burkholderia phytofirmans)).